The primary structure comprises 506 residues: Acrylate reductase flavoprotein subunit (506 aa).

A signal peptide (tat-type signal) is located at residues Met-1–Ala-30. 5 residues coordinate FAD: Ala-54, Glu-74, Asn-82, Gly-87, and Gly-88. The Proton donor role is filled by Arg-333. Positions 473 and 489 each coordinate FAD.

The protein belongs to the FAD-dependent oxidoreductase 2 family. FRD/SDH subfamily. As to quaternary structure, the ArdAB flavocytochrome c is composed of a FAD-containing subunit (ArdA) and a heme c-containing subunit (ArdB). It depends on FAD as a cofactor. Predicted to be exported by the Tat system. The position of the signal peptide cleavage has not been experimentally proven.

The protein resides in the periplasm. Methacrylate acts as a competitive inhibitor of the acrylate reductase activity and suppresses the reductase activity in dose-dependent manner. Its function is as follows. FAD-containing subunit of the ArdAB flavocytochrome c, which catalyzes the reduction of acrylate to propanoate and supports dimethylsulfoniopropionate-dependent anaerobic respiration. In vitro, can use the artificial electron donor methyl viologen. The natural electron donor is probably a low-potential cytochrome c. Also shows weak activity toward methacrylate in vitro (at a 22-fold lower rate) but cannot use other tested 2-enoates, including crotonic, fumaric, sorbic, urocanic, cinnamic, p-coumaric, caffeic or ferulic acids. The protein catalyzes a unidirectional reaction and cannot oxidize propanoate with phenazine metasulfate and dichlorophenolindophenol as electron acceptors. This Shewanella woodyi (strain ATCC 51908 / MS32) protein is Acrylate reductase flavoprotein subunit.